The sequence spans 160 residues: Transcription elongation factor GreA (160 aa).

Residues 1–72 (MAEKTYPMTL…QISSLETKIR (72 aa)) are a coiled coil.

It belongs to the GreA/GreB family.

Necessary for efficient RNA polymerase transcription elongation past template-encoded arresting sites. The arresting sites in DNA have the property of trapping a certain fraction of elongating RNA polymerases that pass through, resulting in locked ternary complexes. Cleavage of the nascent transcript by cleavage factors such as GreA or GreB allows the resumption of elongation from the new 3'terminus. GreA releases sequences of 2 to 3 nucleotides. The sequence is that of Transcription elongation factor GreA from Streptococcus sanguinis (strain SK36).